The following is a 295-amino-acid chain: ATP synthase gamma chain (295 aa).

Belongs to the ATPase gamma chain family. F-type ATPases have 2 components, CF(1) - the catalytic core - and CF(0) - the membrane proton channel. CF(1) has five subunits: alpha(3), beta(3), gamma(1), delta(1), epsilon(1). CF(0) has three main subunits: a, b and c.

The protein resides in the cell inner membrane. Functionally, produces ATP from ADP in the presence of a proton gradient across the membrane. The gamma chain is believed to be important in regulating ATPase activity and the flow of protons through the CF(0) complex. This Chlorobium phaeobacteroides (strain BS1) protein is ATP synthase gamma chain.